A 201-amino-acid polypeptide reads, in one-letter code: uncharacterized protein (201 aa).

2 coiled-coil regions span residues Tyr-3 to Lys-43 and Thr-76 to Lys-120.

This is an uncharacterized protein from Archaeoglobus fulgidus (strain ATCC 49558 / DSM 4304 / JCM 9628 / NBRC 100126 / VC-16).